The following is a 296-amino-acid chain: Isoprenyl transferase (296 aa).

The span at 1–11 (MATERNRRRKG) shows a compositional bias: basic residues. The segment at 1–29 (MATERNRRRKGSYPQLPPAPDDYPTFPDK) is disordered. Aspartate 76 is a catalytic residue. Aspartate 76 is a Mg(2+) binding site. Residues 77–80 (GNGR), tryptophan 81, arginine 89, histidine 93, and 121–123 (STE) contribute to the substrate site. The active-site Proton acceptor is asparagine 124. Substrate contacts are provided by residues tryptophan 125, arginine 127, arginine 244, and 250-252 (RAS). Mg(2+) is bound at residue glutamate 263.

The protein belongs to the UPP synthase family. Homodimer. The cofactor is Mg(2+).

Catalyzes the condensation of isopentenyl diphosphate (IPP) with allylic pyrophosphates generating different type of terpenoids. This is Isoprenyl transferase from Mycolicibacterium parafortuitum (Mycobacterium parafortuitum).